The primary structure comprises 487 residues: MDEPMNDAPGAQVKVTFTTNEADLQLPEEKRQLLVPADIRRYGLSRILNSDLMLDSGSIPFDFLVNGSFLRSSLEDYLNSEGLSLETNLTLQYVRSLIPPVFEASFEHDDWVSSVDALTATSPAGRWSGENFSRGQERILSASYDGLLRIWNASGEVLVTAPSASHGGHSASIKAAKFISSTQIASTGMDRSVRVWKYTDPGASGQAELKPTLELYGHRASVDSLEVHGPSKRILTASADGSVALWSASKSSSPEADASLLPNAHTSKRRKVASSVTTPQRGPLFLMQIHNAPATAAVFDPRDHTVGYSVSQDHTVKTLDLTTGSVVANLTLSHSLLSLCAIPRPNGAPLLAVGTSARHITLVDPRASAATTSVMTLRGHTNKVVALAANPENEYSLVSGSHDGTCRIWDLRSVRPASGGESEGGVGGNVSEPVYVFERESRQGKKKSVAGEGAKVFGVVWDRELGILSGGEDKKVQVNRGRDVVRE.

The segment at 13-95 is ubiquitin-like (UBL) domain; it reads VKVTFTTNEA…ETNLTLQYVR (83 aa). WD repeat units lie at residues 122–161, 168–206, 217–256, 379–419, and 451–487; these read SPAG…LVTA, GHSA…ASGQ, GHRA…SPEA, GHTN…PASG, and GEGA…VVRE. Positions 253 to 277 are disordered; sequence SPEADASLLPNAHTSKRRKVASSVT.

This sequence belongs to the WD repeat WDR12/YTM1 family. In terms of assembly, component of the NOP7 complex, composed of ERB1, NOP7 and YTM1. The complex is held together by ERB1, which interacts with NOP7 via its N-terminal domain and with YTM1 via a high-affinity interaction between the seven-bladed beta-propeller domains of the 2 proteins. The NOP7 complex associates with the 66S pre-ribosome. Interacts (via UBL domain) with MDN1 (via VWFA/MIDAS domain).

The protein resides in the nucleus. It localises to the nucleolus. Its subcellular location is the nucleoplasm. Component of the NOP7 complex, which is required for maturation of the 25S and 5.8S ribosomal RNAs and formation of the 60S ribosome. This chain is Ribosome biogenesis protein YTM1, found in Podospora anserina (strain S / ATCC MYA-4624 / DSM 980 / FGSC 10383) (Pleurage anserina).